Reading from the N-terminus, the 209-residue chain is Ras-related protein Rab-2-A (209 aa).

13-21 provides a ligand contact to GTP; that stretch reads GDTGVGKSC. The Effector region motif lies at 35-43; sequence HDLTIGVEF. GTP is bound by residues 61 to 65, 119 to 122, and 149 to 151; these read DTAGQ, NKCD, and SAK. 2 S-geranylgeranyl cysteine lipidation sites follow: cysteine 207 and cysteine 208.

This sequence belongs to the small GTPase superfamily. Rab family.

The protein resides in the endoplasmic reticulum membrane. Its subcellular location is the golgi apparatus membrane. In terms of biological role, protein transport. Probably involved in vesicular traffic. The protein is Ras-related protein Rab-2-A (RAB2A) of Zea mays (Maize).